Reading from the N-terminus, the 396-residue chain is Apurinic-apyrimidinic endonuclease (396 aa).

Positions 31–41 (KGRGKIQKHIQ) are enriched in basic residues. Residues 31–100 (KGRGKIQKHI…TSGETIAQKK (70 aa)) form a disordered region. Over residues 55–70 (NQSPGTTVEETLTEEN) the composition is skewed to polar residues. Residues 72-85 (STDKEETSKLENKP) are compositionally biased toward basic and acidic residues. His-185, His-225, Glu-261, Asp-295, His-298, His-332, Asp-345, His-347, and Glu-377 together coordinate Zn(2+).

It belongs to the AP endonuclease 2 family. Requires Zn(2+) as cofactor.

It is found in the nucleus. This chain is Apurinic-apyrimidinic endonuclease (apn-1), found in Caenorhabditis elegans.